A 159-amino-acid polypeptide reads, in one-letter code: Phosphopantetheine adenylyltransferase (159 aa).

Belongs to the eukaryotic CoaD family.

It is found in the cytoplasm. The catalysed reaction is (R)-4'-phosphopantetheine + ATP + H(+) = 3'-dephospho-CoA + diphosphate. It functions in the pathway cofactor biosynthesis; coenzyme A biosynthesis. Reversibly transfers an adenylyl group from ATP to 4'-phosphopantetheine, yielding dephospho-CoA (dPCoA) and pyrophosphate. The protein is Phosphopantetheine adenylyltransferase of Thermococcus gammatolerans (strain DSM 15229 / JCM 11827 / EJ3).